Consider the following 298-residue polypeptide: Probable oxidoreductase (298 aa).

Residue 9 to 33 (VVTGGASGLGAETVRALAAAGAEVT) coordinates NAD(+). Substrate is bound at residue serine 139. The Proton acceptor role is filled by tyrosine 165.

This sequence belongs to the short-chain dehydrogenases/reductases (SDR) family.

This is Probable oxidoreductase from Streptomyces antibioticus.